Reading from the N-terminus, the 111-residue chain is uncharacterized protein (111 aa).

The interval 1–85 (MTGLMKAFQK…TSSREDEQKL (85 aa)) is disordered. Positions 11–23 (LSPTKRQYAEITQ) are enriched in polar residues. Over residues 24 to 42 (SNSSISSSSSGSKYNDSSS) the composition is skewed to low complexity. The span at 56–77 (ARASTSTQAQKPASSQQKGGTS) shows a compositional bias: polar residues.

This is an uncharacterized protein from Microplitis demolitor (Parasitoid wasp).